We begin with the raw amino-acid sequence, 156 residues long: Small ribosomal subunit protein uS7 (156 aa).

It belongs to the universal ribosomal protein uS7 family. As to quaternary structure, part of the 30S ribosomal subunit. Contacts proteins S9 and S11.

In terms of biological role, one of the primary rRNA binding proteins, it binds directly to 16S rRNA where it nucleates assembly of the head domain of the 30S subunit. Is located at the subunit interface close to the decoding center, probably blocks exit of the E-site tRNA. The protein is Small ribosomal subunit protein uS7 of Clostridium perfringens (strain ATCC 13124 / DSM 756 / JCM 1290 / NCIMB 6125 / NCTC 8237 / Type A).